A 303-amino-acid chain; its full sequence is Probable 5-dehydro-4-deoxyglucarate dehydratase (303 aa).

Belongs to the DapA family.

It carries out the reaction 5-dehydro-4-deoxy-D-glucarate + H(+) = 2,5-dioxopentanoate + CO2 + H2O. It functions in the pathway carbohydrate acid metabolism; D-glucarate degradation; 2,5-dioxopentanoate from D-glucarate: step 2/2. The polypeptide is Probable 5-dehydro-4-deoxyglucarate dehydratase (Leptothrix cholodnii (strain ATCC 51168 / LMG 8142 / SP-6) (Leptothrix discophora (strain SP-6))).